Here is a 428-residue protein sequence, read N- to C-terminus: Ammonium transporter AmtB (428 aa).

The N-terminal stretch at 1 to 22 is a signal peptide; that stretch reads MKIATIKTGLASLAMLPGLVMA. The Periplasmic segment spans residues 23-32; it reads APAVADKADN. The chain crosses the membrane as a helical span at residues 33 to 54; that stretch reads AFMMICTALVLFMTIPGIALFY. The Cytoplasmic segment spans residues 55–65; it reads GGLIRGKNVLS. A helical membrane pass occupies residues 66 to 90; that stretch reads MLTQVTVTFALVCILWVVYGYSLAF. The Periplasmic portion of the chain corresponds to 91-119; sequence GEGNNFFGNINWLMLKNIELTAVMGSIYQ. Residues 120–142 form a helical membrane-spanning segment; the sequence is YIHVAFQGSFACITVGLIVGALA. The Cytoplasmic segment spans residues 143–146; the sequence is ERIR. The chain crosses the membrane as a helical span at residues 147 to 171; it reads FSAVLIFVVVWLTLSYIPIAHMVWG. The Periplasmic segment spans residues 172–185; sequence GGLLASHGALDFAG. A helical transmembrane segment spans residues 186–201; that stretch reads GTVVHINAAIAGLVGA. The Cytoplasmic segment spans residues 202–221; sequence YLIGKRVGFGKEAFKPHNLP. The chain crosses the membrane as a helical span at residues 222–241; sequence MVFTGTAILYIGWFGFNAGS. Ser-241 provides a ligand contact to NH4(+). The Periplasmic portion of the chain corresponds to 242 to 248; it reads AGTANEI. The chain crosses the membrane as a helical span at residues 249-273; the sequence is AALAFVNTVVATAAAILGWIFGEWA. The Cytoplasmic portion of the chain corresponds to 274–279; sequence LRGKPS. Residues 280–300 form a helical membrane-spanning segment; sequence LLGACSGAIAGLVGVTPACGY. The Periplasmic portion of the chain corresponds to 301–302; the sequence is IG. Residues 303-321 traverse the membrane as a helical segment; the sequence is VGGALIIGVVAGLAGLWGV. At 322–333 the chain is on the cytoplasmic side; that stretch reads TMLKRLLRVDDP. A helical membrane pass occupies residues 334-355; that stretch reads CDVFGVHGVCGIVGCIMTGIFA. Over 356–370 the chain is Periplasmic; sequence ASSLGGVGFAEGVTM. The helical transmembrane segment at 371 to 399 threads the bilayer; that stretch reads GHQLLVQLESIAITIVWSGVVAFIGYKLA. Residues 400–428 lie on the Cytoplasmic side of the membrane; it reads DLTVGLRVPEEQEREGLDVNSHGENAYNA.

Belongs to the ammonia transporter channel (TC 1.A.11.2) family. As to quaternary structure, homotrimer. In response to elevation of the extracellular ammonium concentration, interacts and forms a complex with GlnK.

It is found in the cell inner membrane. In the presence of high extracellular ammonium concentrations, transport activity is inhibited by interaction with the regulatory protein GlnK. Formation of the GlnK-AmtB complex is influenced by intracellular pools of the effector molecules ATP, ADP, Mg(2+) and 2-oxoglutarate. The GlnK-AmtB interaction is also controlled by the level of intracellular glutamine and the uridylylation status of GlnK. Its function is as follows. Involved in the uptake of ammonium/ammonia (NH(4)(+)/NH(3)). Transport is electrogenic. Following sequestration of NH(4)(+) at the periplasmic face, NH(4)(+) is deprotonated and neutral NH(3) is transported into the cytoplasm. Neutral NH(3) and charged H(+) are carried separately across the membrane on a unique two-lane pathway, before recombining to NH(4)(+) inside the cell. The chain is Ammonium transporter AmtB (amtB) from Escherichia coli O157:H7.